The chain runs to 827 residues: SID1 transmembrane family member 1 (827 aa).

The signal sequence occupies residues 1–19; it reads MLDCLRLALLCALPWLLRA. The Extracellular segment spans residues 20–309; the sequence is AVPGHQEEPL…SIKESVYVKS (290 aa). 4 N-linked (GlcNAc...) asparagine glycosylation sites follow: asparagine 67, asparagine 83, asparagine 136, and asparagine 282. Residues 310-330 traverse the membrane as a helical segment; that stretch reads SLFSIFVFLSFYLGCLLVVLV. Over 331–442 the chain is Cytoplasmic; that stretch reads HHVRFQRKSI…DRRIVSKKYK (112 aa). Positions 344–409 are disordered; it reads FGSSDGSGNM…VEESDFDTMP (66 aa). The segment covering 375–386 has biased composition (low complexity); the sequence is SSSSPGRQMSSS. The span at 398-409 shows a compositional bias: acidic residues; it reads SSVEESDFDTMP. Residues 443-463 traverse the membrane as a helical segment; that stretch reads IYFWNIITIAVFYALPVMQLV. At 464 to 494 the chain is on the extracellular side; the sequence is ITYQTVVNVTGNQDICYYNFLCAHPLGVLSA. An N-linked (GlcNAc...) asparagine glycan is attached at asparagine 471. A helical transmembrane segment spans residues 495-515; it reads FNNILSNLGHVLLGFLFLLIV. Over 516–541 the chain is Cytoplasmic; that stretch reads LRRDLLHRRALEAKDIFAMEYGIPKH. A helical transmembrane segment spans residues 542–562; the sequence is FGLFYAMGIALMMEGVLSACY. Residues 563 to 572 lie on the Extracellular side of the membrane; that stretch reads HVCPNYSNFQ. Residue asparagine 567 is glycosylated (N-linked (GlcNAc...) asparagine). A helical transmembrane segment spans residues 573-590; sequence FDTSFMYMIAGLCMLKLY. Over 591–600 the chain is Cytoplasmic; that stretch reads QTRHPDINAS. Residues 601-621 traverse the membrane as a helical segment; the sequence is AYSAYASFAVVITLTVLGVVF. The Extracellular segment spans residues 622–626; sequence GKNDV. A helical membrane pass occupies residues 627–647; it reads WFWIIFSAIHILSSLALSTQI. Residues 648–683 lie on the Cytoplasmic side of the membrane; sequence YYMGRFKIDLGIFRRAAMVFYTDCIQQCSRPLYMDR. A helical membrane pass occupies residues 684–704; that stretch reads MVLLIVGNLVNWSFAFFGLIY. The Extracellular portion of the chain corresponds to 705-710; it reads RPRDFA. A helical transmembrane segment spans residues 711–731; it reads SYMLGIFICNLLLYLAFYIIM. Over 732–741 the chain is Cytoplasmic; it reads KLRSSEKVLP. A helical transmembrane segment spans residues 742–762; that stretch reads LPVFCIAATAVVWAAALYFFF. At 763-791 the chain is on the extracellular side; sequence QNLSSWEGTPAESREKNRECVLLDFFDDH. Asparagine 764 carries N-linked (GlcNAc...) asparagine glycosylation. A helical membrane pass occupies residues 792–812; the sequence is DIWHFLSATALFFSFLVLLTL. Residues 813–827 lie on the Cytoplasmic side of the membrane; the sequence is DDDLDVVRRDQIPVF.

The protein belongs to the SID1 family.

It localises to the membrane. Functionally, in vitro binds long double-stranded RNA (dsRNA) (500 and 700 base pairs), but not dsRNA shorter than 300 bp. Not involved in RNA autophagy, a process in which RNA is directly imported into lysosomes in an ATP-dependent manner, and degraded. In Mus musculus (Mouse), this protein is SID1 transmembrane family member 1 (Sidt1).